The following is a 227-amino-acid chain: Putative ankyrin repeat protein RF_0314 (227 aa).

ANK repeat units lie at residues asparagine 94–isoleucine 126, aspartate 130–leucine 164, and leucine 168–phenylalanine 199.

This chain is Putative ankyrin repeat protein RF_0314, found in Rickettsia felis (strain ATCC VR-1525 / URRWXCal2) (Rickettsia azadi).